Consider the following 226-residue polypeptide: Pyridoxal 5'-phosphate synthase subunit Pdx2 (226 aa).

An L-glutamine-binding site is contributed by 52–54 (GES). The active-site Nucleophile is the C87. L-glutamine contacts are provided by residues R124 and 156-157 (IR). Active-site charge relay system residues include H199 and E201.

Belongs to the glutaminase PdxT/SNO family. In terms of assembly, in the presence of PdxS, forms a dodecamer of heterodimers. Only shows activity in the heterodimer.

It carries out the reaction aldehydo-D-ribose 5-phosphate + D-glyceraldehyde 3-phosphate + L-glutamine = pyridoxal 5'-phosphate + L-glutamate + phosphate + 3 H2O + H(+). It catalyses the reaction L-glutamine + H2O = L-glutamate + NH4(+). Its pathway is cofactor biosynthesis; pyridoxal 5'-phosphate biosynthesis. Its function is as follows. Catalyzes the hydrolysis of glutamine to glutamate and ammonia as part of the biosynthesis of pyridoxal 5'-phosphate. The resulting ammonia molecule is channeled to the active site of PdxS. This chain is Pyridoxal 5'-phosphate synthase subunit Pdx2, found in Plasmodium berghei.